Reading from the N-terminus, the 436-residue chain is Serine--tRNA ligase (436 aa).

Basic and acidic residues predominate over residues 43–55 (TKSEQLKQKRNEV). Residues 43–69 (TKSEQLKQKRNEVSDQIAQAKRNKEDA) are disordered. 237–239 (TAE) serves as a coordination point for L-serine. ATP is bound at residue 268-270 (RSE). Glu291 serves as a coordination point for L-serine. Residue 355 to 358 (EISS) coordinates ATP. Residue Ser390 coordinates L-serine.

The protein belongs to the class-II aminoacyl-tRNA synthetase family. Type-1 seryl-tRNA synthetase subfamily. As to quaternary structure, homodimer. The tRNA molecule binds across the dimer.

It is found in the cytoplasm. The enzyme catalyses tRNA(Ser) + L-serine + ATP = L-seryl-tRNA(Ser) + AMP + diphosphate + H(+). The catalysed reaction is tRNA(Sec) + L-serine + ATP = L-seryl-tRNA(Sec) + AMP + diphosphate + H(+). It participates in aminoacyl-tRNA biosynthesis; selenocysteinyl-tRNA(Sec) biosynthesis; L-seryl-tRNA(Sec) from L-serine and tRNA(Sec): step 1/1. Functionally, catalyzes the attachment of serine to tRNA(Ser). Is also able to aminoacylate tRNA(Sec) with serine, to form the misacylated tRNA L-seryl-tRNA(Sec), which will be further converted into selenocysteinyl-tRNA(Sec). The sequence is that of Serine--tRNA ligase from Lactobacillus gasseri (strain ATCC 33323 / DSM 20243 / BCRC 14619 / CIP 102991 / JCM 1131 / KCTC 3163 / NCIMB 11718 / NCTC 13722 / AM63).